Reading from the N-terminus, the 225-residue chain is Putative elongation factor 1 gamma homolog (225 aa).

The region spanning 94-225 (DFKTRADILR…MCETEMQPIK (132 aa)) is the GST C-terminal domain.

In Saccharomyces cerevisiae (strain ATCC 204508 / S288c) (Baker's yeast), this protein is Putative elongation factor 1 gamma homolog.